The sequence spans 358 residues: DNA integrity scanning protein DisA (358 aa).

Residues 6–144 enclose the DAC domain; the sequence is RPTLREAVAR…RGERHVLTDS (139 aa). Residues glycine 73, leucine 91, and 104-108 each bind ATP; that span reads TRHRS.

Belongs to the DisA family. Homooctamer. Mg(2+) serves as cofactor.

It carries out the reaction 2 ATP = 3',3'-c-di-AMP + 2 diphosphate. In terms of biological role, participates in a DNA-damage check-point. DisA forms globular foci that rapidly scan along the chromosomes searching for lesions. Also has diadenylate cyclase activity, catalyzing the condensation of 2 ATP molecules into cyclic di-AMP (c-di-AMP). c-di-AMP likely acts as a signaling molecule that may couple DNA integrity with a cellular process. The protein is DNA integrity scanning protein DisA of Mycobacterium bovis (strain ATCC BAA-935 / AF2122/97).